A 1067-amino-acid polypeptide reads, in one-letter code: MSSQNSFMASKKEDKGKNIQVVVRCRPFNQLERKASSHSVLECDSQRKEVYVRTGEVNDKLGKKTYTFDMVFGPAAKQIEVYRSVVCPILDEVIMGYNCTIFAYGQTGTGKTFTMEGERSSDEEFTWEQDPLAGIIPRTLHQIFEKLSENGTEFSVKVSLLEIYNEELFDLLSPSPDVGERLQMFDDPRNKRGVIIKGLEEISVHNKDEVYHILERGAARRKTASTLMNAYSSRSHSVFSVTIHMKETTVDGEELVKIGKLNLVDLAGSENIGRSGAVDKRAREAGNINQSLLTLGRVITALVERTPHIPYRESKLTRILQDSLGGRTKTSIIATVSPASINLEETVSTLDYANRAKSIMNKPEVNQKLTKKALIKEYTEEIERLKRELAAAREKNGVYLSSENYEQLQGKVLSQEEMITEYTEKITAMEEELKSISELFADNKKELEECTTILQCKEKELEETQNHLQESKEQLAQESFVVSAFETTEKKLHGTANKLLSTVRETTRDVSGLHEKLDRKKAVDQHNFQVHENFAEQMDRRFSVIQRTVDDYSVKQQGMLDFYTNSIDDLLGASSSRLSATASAVAKSFASVQETVTKQVSHSVEEILKQETLSSQAKGDLQQLMAAHRTGLEEALRSDLLPVVTAVLDLNSHLSHCLQNFLIVADKIDSHKEDMNSFFTEHSRSLHKLRLDSSSALSSIQSEYESLKEDIATAQSMHSEGVNNLISSLQNQLNLLGMETQQQFSGFLSKGGKLQKSVGSLQQDLDLVSSEAIECISSHHKKLAEQSQDVAVEIRQLAGSNMSTLEESSKQCEKLTSSINTISQESQQWCESAGQKIDSVLEEQVCYLHSSKKHLQNLHKGVEDSCGSSVVEITDRVNAQRQAEEKALTSLVEQVRDDQEMVGEQRLELQEQVQSGLNKVHSYLKEELRNDVPTGTTPQRRDYAYPSLLVKTKPRDVLLEQFRQQQQEYLESISSVISEAVEPPVEQDSLEDEPPVAVNDSVISERSCIDLSMTCQEKGGIRFFQQKKALRKEKENRGNTTLLERSKIMDEVDQALTKSKLPLRMQN.

The Kinesin motor domain occupies 18 to 359 (NIQVVVRCRP…LDYANRAKSI (342 aa)). ATP is bound at residue 105–112 (GQTGTGKT). Residues 365-480 (VNQKLTKKAL…SKEQLAQESF (116 aa)) are a coiled coil. Thr-937 is subject to Phosphothreonine; by CDK1. Ser-1046 is subject to Phosphoserine; by NEK6.

The protein belongs to the TRAFAC class myosin-kinesin ATPase superfamily. Kinesin family. BimC subfamily. In terms of assembly, heterotetramer of two heavy and two light chains. Interacts with aurka. In terms of processing, phosphorylation of Thr-937 during mitosis controls the association of this protein with the spindle apparatus. Post-translationally, a subset of this protein primarily localized at the spindle pole is phosphorylated by NEK6 during mitosis. Phosphorylated on a serine residue by aurka. In terms of tissue distribution, in unfertilized eggs, shows highest expression in the germinal vesicle and radial yolk-poor channels. Also present in testis.

The protein localises to the cytoplasm. Its subcellular location is the cytoskeleton. It localises to the spindle pole. Functionally, plus end-directed motor protein required for establishing a bipolar spindle. Associates with both interphase and spindle microtubules. May be involved in nuclear divisions taking place during the development of unfertilized eggs. Required in non-mitotic cells for transport of secretory proteins from the Golgi complex to the cell surface. In Xenopus laevis (African clawed frog), this protein is Kinesin-like protein KIF11-B (kif11-b).